Consider the following 311-residue polypeptide: Putative RNA-binding protein R05D3.8 (311 aa).

One can recognise an RRM domain in the interval 155–235 (KRLFVSYFPL…RRAVLKESVK (81 aa)). Residues 261-270 (TPSRPVTSVH) show a composition bias toward polar residues. The interval 261–311 (TPSRPVTSVHASSSASSNHYDPSAAAGYAPLYHQPPESDPLSQCGYGPRKW) is disordered.

The protein is Putative RNA-binding protein R05D3.8 of Caenorhabditis elegans.